The chain runs to 302 residues: Ribose-5-phosphate isomerase (302 aa).

Belongs to the ribose 5-phosphate isomerase family.

It localises to the cytoplasm. The enzyme catalyses aldehydo-D-ribose 5-phosphate = D-ribulose 5-phosphate. It participates in carbohydrate degradation; pentose phosphate pathway; D-ribose 5-phosphate from D-ribulose 5-phosphate (non-oxidative stage): step 1/1. In Cryptococcus neoformans var. neoformans serotype D (strain B-3501A) (Filobasidiella neoformans), this protein is Ribose-5-phosphate isomerase (RKI1).